The sequence spans 456 residues: D-glycerate 3-kinase, chloroplastic (456 aa).

Residues Met-1–Ser-63 constitute a chloroplast transit peptide. Ala-215–Thr-222 lines the ATP pocket.

The protein belongs to the GLYK kinase family.

It is found in the plastid. The protein localises to the chloroplast. It localises to the cytoplasm. The enzyme catalyses (R)-glycerate + ATP = (2R)-3-phosphoglycerate + ADP + H(+). It participates in photosynthesis; photorespiration; 3-phospho-D-glycerate from glycine: step 4/4. Catalyzes the concluding reaction of the photorespiratory C2 cycle, an indispensable ancillary metabolic pathway to the photosynthetic C3 cycle that enables land plants to grow in an oxygen-containing atmosphere. In terms of biological role, cytoplasmic D-glycerate 3-kinase that constitutes a photorespiratory bypass that alleviates fluctuating light-induced photoinhibition. This Arabidopsis thaliana (Mouse-ear cress) protein is D-glycerate 3-kinase, chloroplastic.